Here is a 709-residue protein sequence, read N- to C-terminus: MATCADILRSEFPEIDGQVFDYVTGVLHSGSADFESVDDLVEAVGELLQEVSGDSKDDAGIRAVCQRMYNTLRLAEPQNQGNSQVLLDAPIQLSKIMENYDCDTKLPGLLKREQSSTVNAKKLEKAEARLKAKQEKRSEKETLKTSNPLVLEEASASQAGSRKESRLESSGKNKSYDVRIENFDVSFGDRVLLAGADVNLAWGRRYGLVGRNGLGKTTLLKMLATRSLRVPAHISLLHVEQEVAGDDTPALQSVLESDTVREDLLRQERELSLRIAAGRAEGSEAAQLAEIYGKLEEIEADKAPARASVILAGLGFTPKMQQQPTREFSGGWRMRLALARALFARPDLLLLDEPTNMLDVRAILWLENYLQTWPSTILVVSHDRNFLNAIATDIIHLHSQRLDGYRGDFETFIKSKQERLLNQQREYEAQQQYRQHIQVFIDRFRYNANRASQVQSKLKMLEKLPELKPVDKESEVVLKFPDGFEKFSPPILQLDEVDFYYDPKHSIFSRLSVSADLESRICVVGENGAGKSTMLKLLMGDLSPVRGIRHAHRNLKIGYFSQHHVEQLDLNVSAVELLARKFPGLPEEEYRHQLGRYGISGELAMRPVASLSGGQKSRVAFAQMTMPCPNFYILDEPTNHLDMETIEALGQALNNFRGGVILVSHDERFIRLVCKELWVCENGSVTRVEGGFDQYRALLQEQFRREGFL.

Ala-2 is modified (N-acetylalanine). A Phosphoserine modification is found at Ser-83. Over residues 129 to 143 (RLKAKQEKRSEKETL) the composition is skewed to basic and acidic residues. The tract at residues 129–171 (RLKAKQEKRSEKETLKTSNPLVLEEASASQAGSRKESRLESSG) is disordered. Residues Ser-155, Ser-157, and Ser-161 each carry the phosphoserine modification. A compositionally biased stretch (basic and acidic residues) spans 161–171 (SRKESRLESSG). 2 ABC transporter domains span residues 178–424 (VRIE…LNQQ) and 492–707 (LQLD…RREG). 210-217 (GRNGLGKT) provides a ligand contact to ATP. Phosphoserine is present on Ser-283. An ATP-binding site is contributed by 525–532 (GENGAGKS).

This sequence belongs to the ABC transporter superfamily. ABCF family. EF3 subfamily.

In terms of biological role, displays an antiviral effect against flaviviruses such as west Nile virus (WNV) in the presence of OAS1B. The sequence is that of ATP-binding cassette sub-family F member 3 (Abcf3) from Mus musculus (Mouse).